The following is a 73-amino-acid chain: Homeodomain-only protein (73 aa).

Positions 3–62 form a DNA-binding region, homeobox; degenerate; that stretch reads AETASGPTEDQVEILEYNFNKVDKHPDSTTLCLIAAEAGLSEEETQKWFKQRLAKWRRSE.

In terms of assembly, interacts with serum response factor (SRF). Component of a large complex containing histone deacetylases such as HDAC2. Interacts with the acetylated forms of HSPA1A and HSPA1B. Interacts with HSPA8. In terms of tissue distribution, widely expressed. Expressed in the heart, brain, placenta, lung, skeletal and smooth muscles, uterus, urinary bladder, kidney and spleen. Down-regulated in some types of cancer such as lung cancer, choriocarcinoma, head and neck squamous cell carcinoma and oral squamous cell carcinoma.

The protein resides in the nucleus. The protein localises to the cytoplasm. In terms of biological role, atypical homeodomain protein which does not bind DNA and is required to modulate cardiac growth and development. Acts via its interaction with SRF, thereby modulating the expression of SRF-dependent cardiac-specific genes and cardiac development. Prevents SRF-dependent transcription either by inhibiting SRF binding to DNA or by recruiting histone deacetylase (HDAC) proteins that prevent transcription by SRF. Overexpression causes cardiac hypertrophy. May act as a tumor suppressor. Acts as a co-chaperone for HSPA1A and HSPA1B chaperone proteins and assists in chaperone-mediated protein refolding. The polypeptide is Homeodomain-only protein (HOPX) (Homo sapiens (Human)).